The primary structure comprises 257 residues: Phosphonates import ATP-binding protein PhnC (257 aa).

The region spanning 4-248 (IEFKNVSKVY…VFSEIYGRTI (245 aa)) is the ABC transporter domain. ATP is bound at residue 37–44 (GLSGAGKS).

This sequence belongs to the ABC transporter superfamily. Phosphonates importer (TC 3.A.1.9.1) family. In terms of assembly, the complex is composed of two ATP-binding proteins (PhnC), two transmembrane proteins (PhnE) and a solute-binding protein (PhnD).

The protein localises to the cell membrane. It carries out the reaction phosphonate(out) + ATP + H2O = phosphonate(in) + ADP + phosphate + H(+). Functionally, part of the ABC transporter complex PhnCDE involved in phosphonates import. Responsible for energy coupling to the transport system. The sequence is that of Phosphonates import ATP-binding protein PhnC from Staphylococcus aureus (strain COL).